Consider the following 186-residue polypeptide: Ribosome maturation factor RimM (186 aa).

In terms of domain architecture, PRC barrel spans 93-166; that stretch reads PDEYYDHQLM…RAVIDPPPGL (74 aa). A disordered region spans residues 160–186; the sequence is IDPPPGLIDDRAEVDSSDTEAATEADA. The segment covering 174 to 186 has biased composition (acidic residues); that stretch reads DSSDTEAATEADA.

This sequence belongs to the RimM family. As to quaternary structure, binds ribosomal protein uS19.

The protein localises to the cytoplasm. Its function is as follows. An accessory protein needed during the final step in the assembly of 30S ribosomal subunit, possibly for assembly of the head region. Essential for efficient processing of 16S rRNA. May be needed both before and after RbfA during the maturation of 16S rRNA. It has affinity for free ribosomal 30S subunits but not for 70S ribosomes. This chain is Ribosome maturation factor RimM, found in Streptomyces avermitilis (strain ATCC 31267 / DSM 46492 / JCM 5070 / NBRC 14893 / NCIMB 12804 / NRRL 8165 / MA-4680).